We begin with the raw amino-acid sequence, 296 residues long: Coiled-coil domain-containing protein 69 (296 aa).

Positions 1 to 18 (MGCRHSRLSSCKPPKKKR) are enriched in basic residues. Residues 1–41 (MGCRHSRLSSCKPPKKKRQEPEPEQPPRPEPHELGPLNGDT) are disordered. Gly2 carries N-myristoyl glycine lipidation. Basic and acidic residues predominate over residues 19–33 (QEPEPEQPPRPEPHE). The stretch at 48 to 272 (CASEEAERHQ…QEKEELLYRV (225 aa)) forms a coiled coil. Phosphoserine occurs at positions 154 and 241.

The protein belongs to the CCDC69 family. Highly expressed in duodenum, esophagus, pancreas, prostate, salivary gland, thymus and urinary bladder.

The protein localises to the cytoplasm. It localises to the cytoskeleton. Its subcellular location is the spindle. The protein resides in the midbody. Its function is as follows. May act as a scaffold to regulate the recruitment and assembly of spindle midzone components. Required for the localization of AURKB and PLK1 to the spindle midzone. This is Coiled-coil domain-containing protein 69 from Homo sapiens (Human).